The following is a 144-amino-acid chain: Cell division protein SepF (144 aa).

Residues 14 to 31 (EDDEMNEVPYTESEEQQE) are compositionally biased toward acidic residues. The tract at residues 14-41 (EDDEMNEVPYTESEEQQEEIPQTQKNER) is disordered.

Belongs to the SepF family. In terms of assembly, homodimer. Interacts with FtsZ.

Its subcellular location is the cytoplasm. Functionally, cell division protein that is part of the divisome complex and is recruited early to the Z-ring. Probably stimulates Z-ring formation, perhaps through the cross-linking of FtsZ protofilaments. Its function overlaps with FtsA. This Lactobacillus johnsonii (strain CNCM I-12250 / La1 / NCC 533) protein is Cell division protein SepF.